A 168-amino-acid chain; its full sequence is CDP-archaeol synthase (168 aa).

The next 5 helical transmembrane spans lie at 7 to 27 (PLESILAIIPALAANGAPVLL), 55 to 75 (GLATGILYGSVIALLAASATC), 80 to 100 (YAAGVFASIGAMLGDMLGAFI), 109 to 129 (GAPAPLLDQLDFYSGALLALY), and 130 to 150 (AAGYVVHPAVALTFTPIVIAL).

The protein belongs to the CDP-archaeol synthase family. Mg(2+) is required as a cofactor.

The protein resides in the cell membrane. The enzyme catalyses 2,3-bis-O-(geranylgeranyl)-sn-glycerol 1-phosphate + CTP + H(+) = CDP-2,3-bis-O-(geranylgeranyl)-sn-glycerol + diphosphate. Its pathway is membrane lipid metabolism; glycerophospholipid metabolism. Its function is as follows. Catalyzes the formation of CDP-2,3-bis-(O-geranylgeranyl)-sn-glycerol (CDP-archaeol) from 2,3-bis-(O-geranylgeranyl)-sn-glycerol 1-phosphate (DGGGP) and CTP. This reaction is the third ether-bond-formation step in the biosynthesis of archaeal membrane lipids. The sequence is that of CDP-archaeol synthase from Hyperthermus butylicus (strain DSM 5456 / JCM 9403 / PLM1-5).